The primary structure comprises 354 residues: Photosystem II D2 protein (354 aa).

Position 2 is an N-acetylthreonine (threonine 2). Phosphothreonine is present on threonine 2. A helical transmembrane segment spans residues 42–62 (CAYFALGGFFTGNTFVTSWYT). Position 119 (histidine 119) interacts with chlorophyll a. Residues 126-142 (GFMLRQFEIARAVKIRP) form a helical membrane-spanning segment. Pheophytin a is bound by residues glutamine 131 and asparagine 144. Residues 154–167 (VFVSVFLIYPLGQQ) form a helical membrane-spanning segment. Histidine 199 contributes to the chlorophyll a binding site. Residues 209-229 (AALLCAIHGATVENTLFEDGD) form a helical membrane-spanning segment. 2 residues coordinate a plastoquinone: histidine 216 and phenylalanine 263. Histidine 216 lines the Fe cation pocket. Fe cation is bound at residue histidine 270. A helical membrane pass occupies residues 280-296 (GLWMSAIGVVGLALNLR).

Belongs to the reaction center PufL/M/PsbA/D family. PSII is composed of 1 copy each of membrane proteins PsbA, PsbB, PsbC, PsbD, PsbE, PsbF, PsbH, PsbI, PsbJ, PsbK, PsbL, PsbM, PsbT, PsbX, PsbY, PsbZ, Psb30/Ycf12, at least 3 peripheral proteins of the oxygen-evolving complex and a large number of cofactors. It forms dimeric complexes. The cofactor is The D1/D2 heterodimer binds P680, chlorophylls that are the primary electron donor of PSII, and subsequent electron acceptors. It shares a non-heme iron and each subunit binds pheophytin, quinone, additional chlorophylls, carotenoids and lipids. There is also a Cl(-1) ion associated with D1 and D2, which is required for oxygen evolution. The PSII complex binds additional chlorophylls, carotenoids and specific lipids..

It localises to the plastid. Its subcellular location is the chloroplast thylakoid membrane. It carries out the reaction 2 a plastoquinone + 4 hnu + 2 H2O = 2 a plastoquinol + O2. Photosystem II (PSII) is a light-driven water:plastoquinone oxidoreductase that uses light energy to abstract electrons from H(2)O, generating O(2) and a proton gradient subsequently used for ATP formation. It consists of a core antenna complex that captures photons, and an electron transfer chain that converts photonic excitation into a charge separation. The D1/D2 (PsbA/PsbD) reaction center heterodimer binds P680, the primary electron donor of PSII as well as several subsequent electron acceptors. D2 is needed for assembly of a stable PSII complex. This is Photosystem II D2 protein from Mesostigma viride (Green alga).